Consider the following 114-residue polypeptide: Period circadian protein (114 aa).

Positions 23–114 (VTNTSIAGTG…VTLTESLLNK (92 aa)) are disordered. Tandem repeats lie at residues 30–31 (GT), 33–34 (GT), 36–37 (GT), 38–39 (GT), 40–41 (GT), 42–43 (GT), 44–45 (GT), 46–47 (GT), 48–49 (GT), 50–51 (GT), 52–53 (GT), 54–55 (GT), 56–57 (GT), and 58–59 (GT). Residues 30-79 (GTGGTGGTGTGTGTGTGTGTGTGTGTGTGTDTGTGTGTGTETGTGTGTGT) are compositionally biased toward gly residues. Residues 30-87 (GTGGTGGTGTGTGTGTGTGTGTGTGTGTGTDTGTGTGTGTETGTGTGTGTRNGTNSGT) are 28 X 2 AA approximate tandem repeats of G-[TN]. The 15; approximate repeat unit spans residues 60 to 61 (DT). 4 repeat units span residues 62 to 63 (GT), 64 to 65 (GT), 66 to 67 (GT), and 68 to 69 (GT). A 20; approximate repeat occupies 70-71 (ET). Repeat copies occupy residues 72-73 (GT), 74-75 (GT), 76-77 (GT), and 78-79 (GT). A 25; approximate repeat occupies 80-81 (RN). A compositionally biased stretch (low complexity) spans 80 to 91 (RNGTNSGTKTGT). Repeat unit 26 spans residues 82 to 83 (GT). The 27; approximate repeat unit spans residues 84-85 (NS). Repeat 28 spans residues 86–87 (GT). The span at 105–114 (VTLTESLLNK) shows a compositional bias: polar residues.

In terms of assembly, forms a heterodimer with timeless (TIM); the complex then translocates into the nucleus. Phosphorylated with a circadian rhythmicity, probably by the double-time protein (dbt). Phosphorylation could be implicated in the stability of per monomer and in the formation of heterodimer per-tim.

The protein resides in the nucleus. It localises to the cytoplasm. Its subcellular location is the perinuclear region. In terms of biological role, essential for biological clock functions. Determines the period length of circadian and ultradian rhythms; an increase in PER dosage leads to shortened circadian rhythms and a decrease leads to lengthened circadian rhythms. Essential for the circadian rhythmicity of locomotor activity, eclosion behavior, and for the rhythmic component of the male courtship song that originates in the thoracic nervous system. The biological cycle depends on the rhythmic formation and nuclear localization of the TIM-PER complex. Light induces the degradation of TIM, which promotes elimination of PER. Nuclear activity of the heterodimer coordinatively regulates PER and TIM transcription through a negative feedback loop. Behaves as a negative element in circadian transcriptional loop. Does not appear to bind DNA, suggesting indirect transcriptional inhibition. The chain is Period circadian protein (per) from Drosophila orena (Fruit fly).